A 316-amino-acid polypeptide reads, in one-letter code: tRNA dimethylallyltransferase (316 aa).

Position 9 to 16 (9 to 16) interacts with ATP; that stretch reads GPTASGKS. Position 11–16 (11–16) interacts with substrate; it reads TASGKS. Interaction with substrate tRNA regions lie at residues 34-37 and 158-162; these read DSMQ and QRLAR.

Belongs to the IPP transferase family. In terms of assembly, monomer. Requires Mg(2+) as cofactor.

The catalysed reaction is adenosine(37) in tRNA + dimethylallyl diphosphate = N(6)-dimethylallyladenosine(37) in tRNA + diphosphate. Functionally, catalyzes the transfer of a dimethylallyl group onto the adenine at position 37 in tRNAs that read codons beginning with uridine, leading to the formation of N6-(dimethylallyl)adenosine (i(6)A). The sequence is that of tRNA dimethylallyltransferase from Hyphomonas neptunium (strain ATCC 15444).